A 488-amino-acid chain; its full sequence is Proline--tRNA ligase (488 aa).

Belongs to the class-II aminoacyl-tRNA synthetase family. ProS type 3 subfamily. As to quaternary structure, homodimer.

The protein localises to the cytoplasm. The catalysed reaction is tRNA(Pro) + L-proline + ATP = L-prolyl-tRNA(Pro) + AMP + diphosphate. Catalyzes the attachment of proline to tRNA(Pro) in a two-step reaction: proline is first activated by ATP to form Pro-AMP and then transferred to the acceptor end of tRNA(Pro). The chain is Proline--tRNA ligase from Symbiobacterium thermophilum (strain DSM 24528 / JCM 14929 / IAM 14863 / T).